Here is a 507-residue protein sequence, read N- to C-terminus: MEKYQFIKQVGDGAYGDVIKAIDVKTGEIVAIKRMKKKFSDWKECIQLREIKALKKLKHPNIVKLLEIILERDELFFVFEYLENNLYESIKDRTKLLPETTIRNIIYQILQALHFMHTNGFFHRDLKPENIMLVGERLKIADFGLAREIESKPPFTDYISTRWYRAPEVLLRCTYYNAPIDIWAVGAIMAELYSLKPMFPGSSEIDQLFKICTIMGSPTSATWIDGIKLANSMGFTFPNVQPPSINPLSTLLPNANQDAIELITDLLQYDPLKRPTPLQALQHRYFKVSIPSSILLKPNFIELSNKYLIKNGYINNNINNNSNYSNNNNNNNLNSNSENLNNVNKNNQQPHSPQKIQTPKPKNSFLRKSRYSYLNNVSLENVNNNNNNYNSNTTSGYYNQKLDSTPRLSPRIVRQQQQQILLPLIIQQQPPPQSQPPQSQPPPQSQPPPILTQQQQQQQQQQQQQQQLPSKTTIYHNTNHLNAPIPPNHQRGISPQFYNETTNNSKL.

Positions 4-286 constitute a Protein kinase domain; the sequence is YQFIKQVGDG…PLQALQHRYF (283 aa). ATP contacts are provided by residues 10–18 and Lys33; that span reads VGDGAYGDV. The Proton acceptor role is filled by Asp125. Low complexity predominate over residues 323 to 347; sequence NYSNNNNNNNLNSNSENLNNVNKNN. 3 disordered regions span residues 323 to 364, 381 to 404, and 428 to 507; these read NYSN…PKNS, NVNN…KLDS, and QQPP…NSKL. Positions 348–361 are enriched in polar residues; that stretch reads QQPHSPQKIQTPKP. A compositionally biased stretch (low complexity) spans 381-399; the sequence is NVNNNNNNYNSNTTSGYYN. Positions 429–450 are enriched in pro residues; it reads QPPPQSQPPQSQPPPQSQPPPI. The segment covering 451-470 has biased composition (low complexity); sequence LTQQQQQQQQQQQQQQQLPS. Polar residues-rich tracts occupy residues 471-481 and 491-507; these read KTTIYHNTNHL and RGIS…NSKL.

The protein belongs to the protein kinase superfamily. CMGC Ser/Thr protein kinase family. CDC2/CDKX subfamily.

The catalysed reaction is L-seryl-[protein] + ATP = O-phospho-L-seryl-[protein] + ADP + H(+). It catalyses the reaction L-threonyl-[protein] + ATP = O-phospho-L-threonyl-[protein] + ADP + H(+). This is Probable serine/threonine-protein kinase DDB_G0268078 from Dictyostelium discoideum (Social amoeba).